Reading from the N-terminus, the 447-residue chain is Thiol-specific monooxygenase (447 aa).

FAD-binding positions include G13–S17, E38, V46–W47, N91–T92, and D137–V138. T90–N91 lines the NADP(+) pocket. Residue S223–D226 coordinates NADP(+).

This sequence belongs to the FMO family. Monomer. The cofactor is FAD.

Its function is as follows. Flavin-dependent oxidation of thiol-containing compounds. Probably required for the correct folding of disulfide-bonded proteins. The chain is Thiol-specific monooxygenase (fmo1) from Schizosaccharomyces pombe (strain 972 / ATCC 24843) (Fission yeast).